Here is a 294-residue protein sequence, read N- to C-terminus: 2-hydroxy-3-oxopropionate reductase (294 aa).

Residues 4–18 (GFIG…MSKN) and serine 95 each bind NAD(+). Residue lysine 170 is part of the active site. Residue lysine 238 coordinates NAD(+).

The protein belongs to the HIBADH-related family. 2-hydroxy-3-oxopropionate reductase subfamily.

The enzyme catalyses (R)-glycerate + NADP(+) = 2-hydroxy-3-oxopropanoate + NADPH + H(+). The catalysed reaction is (R)-glycerate + NAD(+) = 2-hydroxy-3-oxopropanoate + NADH + H(+). Its pathway is carbohydrate acid metabolism; galactarate degradation; D-glycerate from galactarate: step 3/3. Catalyzes the reduction of tatronate semialdehyde to D-glycerate. The sequence is that of 2-hydroxy-3-oxopropionate reductase from Escherichia coli O6:H1 (strain CFT073 / ATCC 700928 / UPEC).